The sequence spans 120 residues: Small ribosomal subunit protein eS24 (120 aa).

Residues 101-120 (RDAGTKQKKGGSKGGQGAKG) form a disordered region.

This sequence belongs to the eukaryotic ribosomal protein eS24 family.

This is Small ribosomal subunit protein eS24 from Saccharolobus islandicus (strain M.16.27) (Sulfolobus islandicus).